The sequence spans 698 residues: Probable xyloglucan glycosyltransferase 2 (698 aa).

2 helical membrane-spanning segments follow: residues 124 to 144 and 190 to 210; these read GFLA…WNGW and ILLF…CFWI. The active site involves aspartate 272. Substrate contacts are provided by aspartate 331 and aspartate 333. Aspartate 425 is a catalytic residue. The next 4 membrane-spanning stretches (helical) occupy residues 503–523, 528–548, 653–668, and 673–693; these read LILP…TMFV, LPVW…ILPS, LALS…RSLL, and IHFY…LDLI.

It belongs to the glycosyltransferase 2 family. Plant cellulose synthase-like C subfamily.

It is found in the golgi apparatus membrane. Its function is as follows. Probable beta-1,4-glucan synthase rather involved in the synthesis of the xyloglucan backbone than cellulose. Seems to work simultaneously with xyloglucan 6-xylosyltransferase. Xyloglucan is a noncellulosic polysaccharides of plant cell wall and consists of a glucan backbone substituted by xylose, galactose and fucose. This chain is Probable xyloglucan glycosyltransferase 2 (CSLC2), found in Oryza sativa subsp. japonica (Rice).